The primary structure comprises 171 residues: Thioredoxin-2 (171 aa).

Residues 41–169 (AFNASPSTSQ…LQALISANHP (129 aa)) form the Thioredoxin domain. The cysteines at positions 95 and 98 are disulfide-linked.

It belongs to the thioredoxin family.

The protein resides in the cytoplasm. It localises to the vacuole. Functionally, thioredoxin involved in responses to oxidative and cell wall stresses. Plays an important role in appressorium formation on hyphal tips. TRX2 may affect invasive growth via the MST11-MST7-PMK1 pathway since it is required for the proper folding or dimerization of MAPKK MST7. The sequence is that of Thioredoxin-2 from Pyricularia oryzae (strain 70-15 / ATCC MYA-4617 / FGSC 8958) (Rice blast fungus).